Reading from the N-terminus, the 338-residue chain is Phosphonates-binding periplasmic protein (338 aa).

A signal peptide spans 1–26; sequence MNAKIIASLAFTSMFSLSTLLSPAHA.

The protein belongs to the phosphate/phosphite/phosphonate binding protein family. The complex is composed of two ATP-binding proteins (PhnC), two transmembrane proteins (PhnE) and a solute-binding protein (PhnD).

Its subcellular location is the periplasm. Its function is as follows. Phosphonate binding protein that is part of the phosphonate uptake system. Exhibits high affinity for 2-aminoethylphosphonate, and somewhat less affinity to ethylphosphonate, methylphosphonate, phosphonoacetate and phenylphosphonate. This chain is Phosphonates-binding periplasmic protein (phnD), found in Escherichia coli (strain K12).